The chain runs to 315 residues: MARLPILLLLISLVYSTPSPQTSKKIGDDATLSCNRNNTNDYVVMSAWYKEPNSIILLAAKSDVLYFDNYTKDKISYDSPYDDLVTTITIKSLTARDAGTYVCAFFMTSPTNDTDKVDYEEYSTELIVNTDSESTIDIILSGSTHSPETSSEKPEDIDNLNCSSVFEIATPEPITDNVEDHTDTVTYTSDSINTVSASSGESTTDETPEPITDKEEDHTVTDTVSYTTVSTSSGIVTTKSTTDDADLYDTYNDNDTVPSTTVGCSTTSISNYKTKDFVEIFGITALIILSAVAIFCITYYIYNKRSRKYKTENKV.

Positions 1–16 are cleaved as a signal peptide; the sequence is MARLPILLLLISLVYS. Positions 17 to 121 constitute an Ig-like V-type domain; the sequence is TPSPQTSKKI…NDTDKVDYEE (105 aa). At 17 to 279 the chain is on the virion surface side; sequence TPSPQTSKKI…SNYKTKDFVE (263 aa). A disulfide bond links cysteine 34 and cysteine 103. Residues asparagine 37, asparagine 69, asparagine 112, and asparagine 161 are each glycosylated (N-linked (GlcNAc...) asparagine; by host). Residues 192-202 are compositionally biased toward polar residues; sequence INTVSASSGES. The segment at 192–214 is disordered; sequence INTVSASSGESTTDETPEPITDK. Asparagine 254 carries N-linked (GlcNAc...) asparagine; by host glycosylation. A helical membrane pass occupies residues 280 to 303; sequence IFGITALIILSAVAIFCITYYIYN. Residues 304 to 315 lie on the Intravirion side of the membrane; it reads KRSRKYKTENKV.

This sequence belongs to the orthopoxvirus OPG185 family. In terms of assembly, heterodimerizes with OPG040. The heterodimer OPG185-OPG040 interacts with components of the entry fusion complex OPG143 and OPG094. Heterodimer with C3/VPC protein; disulfide-linked. In terms of processing, glycosylated; contains phosphate and sulfate-substituted glycans. O-glycosylation is required for hemagglutination and hemadsorption activities of infected cell membranes.

The protein localises to the virion membrane. It is found in the host membrane. Its function is as follows. Prevents cell to cell fusion by interacting with and directing the viral OPG040 protein on the host plasma membrane. The OPG185-OPG040 complex associates with components of the entry fusion complex (EFC) presumably to avoid superinfection and syncytium formation. Via its interaction with C3/VCP protein, protects the infected cell and probably also the extracellular enveloped virus from complement attack. This chain is Protein OPG185 (OPG185), found in Vaccinia virus (strain Tian Tan) (VACV).